A 271-amino-acid chain; its full sequence is Regulatory protein RecX (271 aa).

It belongs to the RecX family.

It is found in the cytoplasm. Its function is as follows. Modulates RecA activity. This chain is Regulatory protein RecX, found in Geobacillus sp. (strain WCH70).